Consider the following 312-residue polypeptide: Transcription factor Ouib (312 aa).

The 76-residue stretch at isoleucine 4 to isoleucine 79 folds into the ZAD domain. Positions 6, 9, 52, and 55 each coordinate Zn(2+). C2H2-type zinc fingers lie at residues tyrosine 167–histidine 189, phenylalanine 195–histidine 217, phenylalanine 223–histidine 245, tyrosine 251–histidine 273, and phenylalanine 279–histidine 303.

Expressed predominantly in the prothoracic gland during embryonic and larval development.

Its subcellular location is the nucleus. Transcription factor required for ecdysteroid production in the prothoracic gland by activating transcription of the ecdysteroid biosynthesis gene spok. Binds to the 5'-AGCTTTATTATTTAG-3' DNA sequence in the spok enhancer region. The chain is Transcription factor Ouib from Drosophila melanogaster (Fruit fly).